Here is a 388-residue protein sequence, read N- to C-terminus: Endoglucanase 3 (388 aa).

A signal peptide spans 1–16; that stretch reads MKHSVLAGLFATGALA. One can recognise a CBM1 domain in the interval 17 to 52; it reads QGGAWQQCGGVGFSGSTSCVSGYTCVYLNDWYSQCQ. Disulfide bonds link Cys24–Cys41 and Cys35–Cys51. Residues 53 to 91 are linker; it reads PQPTTLRTTTTPGATSTTRSAPAATSTTPAKGKFKWFGI. The tract at residues 56–81 is disordered; the sequence is TTLRTTTTPGATSTTRSAPAATSTTP. Asn92 and Asn155 each carry an N-linked (GlcNAc...) asparagine glycan. The tract at residues 92-388 is catalytic; the sequence is NQSCAEFGKG…YNSLLKKYVP (297 aa). Glu215 serves as the catalytic Proton donor. N-linked (GlcNAc...) asparagine glycosylation occurs at Asn259. Glu322 functions as the Nucleophile in the catalytic mechanism.

It belongs to the glycosyl hydrolase 5 (cellulase A) family.

It carries out the reaction Endohydrolysis of (1-&gt;4)-beta-D-glucosidic linkages in cellulose, lichenin and cereal beta-D-glucans.. The protein is Endoglucanase 3 (CMC3) of Humicola insolens (Soft-rot fungus).